A 117-amino-acid chain; its full sequence is Flagellar transcriptional regulator FlhD (117 aa).

The protein belongs to the FlhD family. In terms of assembly, homodimer; disulfide-linked. Forms a heterohexamer composed of two FlhC and four FlhD subunits. Each FlhC binds a FlhD dimer, forming a heterotrimer, and a hexamer assembles by dimerization of two heterotrimers.

It is found in the cytoplasm. Functions in complex with FlhC as a master transcriptional regulator that regulates transcription of several flagellar and non-flagellar operons by binding to their promoter region. Activates expression of class 2 flagellar genes, including fliA, which is a flagellum-specific sigma factor that turns on the class 3 genes. Also regulates genes whose products function in a variety of physiological pathways. The protein is Flagellar transcriptional regulator FlhD of Erwinia amylovora (strain CFBP1430).